Here is a 234-residue protein sequence, read N- to C-terminus: Enolase-phosphatase E1 (234 aa).

The disordered stretch occupies residues 212–234 (RPGNYPQPQHSHFKISSFEGLNP).

It belongs to the HAD-like hydrolase superfamily. MasA/MtnC family. In terms of assembly, monomer. It depends on Mg(2+) as a cofactor.

It catalyses the reaction 5-methylsulfanyl-2,3-dioxopentyl phosphate + H2O = 1,2-dihydroxy-5-(methylsulfanyl)pent-1-en-3-one + phosphate. It functions in the pathway amino-acid biosynthesis; L-methionine biosynthesis via salvage pathway; L-methionine from S-methyl-5-thio-alpha-D-ribose 1-phosphate: step 3/6. It participates in amino-acid biosynthesis; L-methionine biosynthesis via salvage pathway; L-methionine from S-methyl-5-thio-alpha-D-ribose 1-phosphate: step 4/6. Functionally, bifunctional enzyme that catalyzes the enolization of 2,3-diketo-5-methylthiopentyl-1-phosphate (DK-MTP-1-P) into the intermediate 2-hydroxy-3-keto-5-methylthiopentenyl-1-phosphate (HK-MTPenyl-1-P), which is then dephosphorylated to form the acireductone 1,2-dihydroxy-3-keto-5-methylthiopentene (DHK-MTPene). This chain is Enolase-phosphatase E1, found in Leptospira interrogans serogroup Icterohaemorrhagiae serovar copenhageni (strain Fiocruz L1-130).